The primary structure comprises 398 residues: Arginine biosynthesis bifunctional protein ArgJ (398 aa).

The substrate site is built by threonine 148, lysine 174, threonine 185, glutamate 271, asparagine 393, and threonine 398. The Nucleophile role is filled by threonine 185.

It belongs to the ArgJ family. Heterotetramer of two alpha and two beta chains.

The protein resides in the cytoplasm. It carries out the reaction N(2)-acetyl-L-ornithine + L-glutamate = N-acetyl-L-glutamate + L-ornithine. The enzyme catalyses L-glutamate + acetyl-CoA = N-acetyl-L-glutamate + CoA + H(+). It participates in amino-acid biosynthesis; L-arginine biosynthesis; L-ornithine and N-acetyl-L-glutamate from L-glutamate and N(2)-acetyl-L-ornithine (cyclic): step 1/1. It functions in the pathway amino-acid biosynthesis; L-arginine biosynthesis; N(2)-acetyl-L-ornithine from L-glutamate: step 1/4. Functionally, catalyzes two activities which are involved in the cyclic version of arginine biosynthesis: the synthesis of N-acetylglutamate from glutamate and acetyl-CoA as the acetyl donor, and of ornithine by transacetylation between N(2)-acetylornithine and glutamate. The sequence is that of Arginine biosynthesis bifunctional protein ArgJ from Listeria monocytogenes serotype 4b (strain F2365).